Reading from the N-terminus, the 116-residue chain is NADH dehydrogenase [ubiquinone] 1 alpha subcomplex subunit 5 (116 aa).

Ala-2 carries the N-acetylalanine modification. Lys-30, Lys-46, and Lys-60 each carry N6-acetyllysine. Residue Ser-89 is modified to Phosphoserine. Lys-98 is modified (N6-acetyllysine; alternate). N6-succinyllysine; alternate is present on Lys-98.

This sequence belongs to the complex I NDUFA5 subunit family. In terms of assembly, complex I is composed of 45 different subunits.

The protein resides in the mitochondrion inner membrane. In terms of biological role, accessory subunit of the mitochondrial membrane respiratory chain NADH dehydrogenase (Complex I), that is believed not to be involved in catalysis. Complex I functions in the transfer of electrons from NADH to the respiratory chain. The immediate electron acceptor for the enzyme is believed to be ubiquinone. In Macaca fascicularis (Crab-eating macaque), this protein is NADH dehydrogenase [ubiquinone] 1 alpha subcomplex subunit 5 (NDUFA5).